The primary structure comprises 992 residues: Ankyrin repeat domain-containing protein 18A (992 aa).

5 ANK repeats span residues 67–96 (KDRT…QIDI), 100–129 (LNRT…NPNI), 133–162 (YGNT…NIEA), 166–195 (EGNT…NIHA), and 199–228 (FKRT…RISS). The segment at 262–320 (NHLRNDNQETAAMKPANLKKRKERAKAEHNLKVASEEKQERLQRSENKQPQDSQSYGKK) is disordered. Coiled coils occupy residues 278 to 310 (NLKK…ENKQ), 378 to 618 (KMIT…AERE), 683 to 713 (ISLL…CLEM), and 743 to 899 (FKKL…EAFA). Residues 286 to 310 (AKAEHNLKVASEEKQERLQRSENKQ) are compositionally biased toward basic and acidic residues.

This is Ankyrin repeat domain-containing protein 18A (ANKRD18A) from Homo sapiens (Human).